Reading from the N-terminus, the 117-residue chain is Putative pterin-4-alpha-carbinolamine dehydratase (117 aa).

Belongs to the pterin-4-alpha-carbinolamine dehydratase family.

The catalysed reaction is (4aS,6R)-4a-hydroxy-L-erythro-5,6,7,8-tetrahydrobiopterin = (6R)-L-erythro-6,7-dihydrobiopterin + H2O. The sequence is that of Putative pterin-4-alpha-carbinolamine dehydratase from Aeromonas salmonicida (strain A449).